The following is a 270-amino-acid chain: Small ribosomal subunit protein uS2 (270 aa).

Belongs to the universal ribosomal protein uS2 family. As to quaternary structure, component of the small ribosomal subunit. Mature ribosomes consist of a small (40S) and a large (60S) subunit. The 40S subunit contains about 33 different proteins and 1 molecule of RNA (18S). The 60S subunit contains about 49 different proteins and 3 molecules of RNA (28S, 5.8S and 5S). Interacts with oho23B/rpS21.

It localises to the cytoplasm. It is found in the nucleus. Required for the assembly and/or stability of the 40S ribosomal subunit. Required for the processing of the 20S rRNA-precursor to mature 18S rRNA in a late step of the maturation of 40S ribosomal subunits. Required during oogenesis and imaginal development. The protein is Small ribosomal subunit protein uS2 of Drosophila persimilis (Fruit fly).